We begin with the raw amino-acid sequence, 890 residues long: Possible lysine-specific histone demethylase 1 (890 aa).

The span at 1-13 (MKPTQFGGSSSKM) shows a compositional bias: polar residues. Residues 1–164 (MKPTQFGGSS…TVLSGQEGAV (164 aa)) form a disordered region. A phosphoserine mark is found at Ser24 and Ser27. Positions 84 to 109 (NRPSGSGDTASNDKSGSASMGPNNQQ) are enriched in polar residues. Residues 110–122 (AERRSQSQTRKSE) are compositionally biased toward basic and acidic residues. Residues 123–138 (ANATSSSVSGPSAGNS) are compositionally biased toward low complexity. Residues 160–259 (QEGAVFQSRL…FGIFKRLKPI (100 aa)) enclose the SWIRM domain. 267–295 (VIVIGAGISGLAVAHQLQQFGMDVIVLEA) serves as a coordination point for FAD. The tract at residues 860 to 890 (DLSPNLSDSSPSSKKSEENSNSNTADSTELQ) is disordered. Residues 861 to 882 (LSPNLSDSSPSSKKSEENSNSN) are compositionally biased toward low complexity. Ser866 carries the post-translational modification Phosphoserine.

This sequence belongs to the flavin monoamine oxidase family. Component of a complex that contains at least HDAC1/Rpd3, CoRest and Su(var)3-3/Hdm. It depends on FAD as a cofactor.

It is found in the nucleus. Its subcellular location is the chromosome. In terms of biological role, probable histone demethylase that specifically demethylates 'Lys-4' of histone H3, a specific tag for epigenetic transcriptional activation, thereby acting as a corepressor. Required for heterochromatic gene silencing. Acts by oxidizing the substrate by FAD to generate the corresponding imine that is subsequently hydrolyzed. Demethylates both mono- and tri-methylated 'Lys-4' of histone H3. May also demethylate 'Lys-9' of histone H3, Plays a role in the repression of neuronal genes. In Drosophila melanogaster (Fruit fly), this protein is Possible lysine-specific histone demethylase 1 (Su(var)3-3).